The following is a 384-amino-acid chain: MSLAKKIDDDEKQLVKPVNKEQTYKKPIPLEEDDYIEGLSYIIQQQYFPDLPKLKAEVVLESEEVGSFDAQNESRDEKLKYLIAKNSEDPLRKRLPSLAIHEITKAQLDGENKPISVASYQNKFTSEDNASFGELMEDESRLRAEQHKRRFGVHSQQPSNSIQTIGYSNSDAIKSIAWKEKDKSIKTWNYQPKNALMYTPETNHSSSLSQIKKQSTEIQADATGLSQSFLEAANQPSTDPIVPPSVNETDASVNGYPLVDVNFGQAVGSSSKSYFNIPERPRRERLHAMRVRDIRSHSTNTTITSVDSASTALNSYSTPNSVSRKLTNLTPAARRLVARSYLRSPLHGSSPSASRHTALRTSIPKFSWTPTPRVKSTAPTPKRV.

2 disordered regions span residues 1–22 and 344–384; these read MSLAKKIDDDEKQLVKPVNKEQ and SPLH…PKRV.

Belongs to the ESS2 family. In terms of assembly, heterodimer with ish1.

Its subcellular location is the nucleus. It localises to the cytoplasm. The protein localises to the cytoskeleton. It is found in the spindle. Functionally, has a role in maintaining cell viability during stationary phase induced by stress response. May be involved in pre-mRNA splicing. This Schizosaccharomyces pombe (strain 972 / ATCC 24843) (Fission yeast) protein is Stress response protein bis1 (bis1).